The following is a 544-amino-acid chain: Esterase-6 (544 aa).

The N-terminal stretch at 1 to 21 (MNYVGLGLIIVLSCLWLGSNA) is a signal peptide. The N-linked (GlcNAc...) asparagine glycan is linked to asparagine 42. Cysteines 86 and 105 form a disulfide. Serine 209 functions as the Acyl-ester intermediate in the catalytic mechanism. The cysteines at positions 261 and 273 are disulfide-linked. N-linked (GlcNAc...) asparagine glycosylation is found at asparagine 420 and asparagine 456. Catalysis depends on histidine 466, which acts as the Charge relay system. N-linked (GlcNAc...) asparagine glycosylation is present at asparagine 506. A disulfide bond links cysteine 514 and cysteine 535.

Belongs to the type-B carboxylesterase/lipase family. As to quaternary structure, monomer. As to expression, specifically expressed in the ejaculatory bulbs of male.

It localises to the secreted. The enzyme catalyses a carboxylic ester + H2O = an alcohol + a carboxylate + H(+). Functionally, transferred from the ejaculatory bulbs of males to the female genitals upon copulation, plays an important role in the reproductive biology. In Drosophila melanogaster (Fruit fly), this protein is Esterase-6 (Est-6).